Consider the following 154-residue polypeptide: MAARLCCQLDPARDVLCLRPVGAESRGRPLPGPLGALPPASPPAVPSDHGAHLSLRGLPVCAFSSAGPCALRFTSARRMETTVNAHRNLPKVLHKRTLGLSAMSTTDLEAHFKDCVFTEWEELGEEIRLKVFVLGGCRHKLVCSPAPCNFFTSA.

Residues 68 to 117 (PCALRFTSARRMETTVNAHRNLPKVLHKRTLGLSAMSTTDLEAHFKDCVF) are mitochondrial targeting sequence.

Belongs to the orthohepadnavirus protein X family. May form homodimer. May interact with host CEBPA, CFLAR, CREB1, DDB1, E4F1, HBXIP, HSPD1/HSP60, NFKBIA, POLR2E and SMAD4. Interacts with host SMC5-SMC6 complex and induces its degradation. Interacts with host TRPC4AP; leading to prevent ubiquitination of TRPC4AP. Interacts with host PLSCR1; this interaction promotes ubiquitination and degradation of HBx and impairs HBx-mediated cell proliferation. Post-translationally, a fraction may be phosphorylated in insect cells and HepG2 cells, a human hepatoblastoma cell line. Phosphorylated in vitro by host protein kinase C or mitogen-activated protein kinase. N-acetylated in insect cells.

The protein resides in the host cytoplasm. Its subcellular location is the host nucleus. It localises to the host mitochondrion. Its function is as follows. Multifunctional protein that plays a role in silencing host antiviral defenses and promoting viral transcription. Does not seem to be essential for HBV infection. May be directly involved in development of cirrhosis and liver cancer (hepatocellular carcinoma). Most of cytosolic activities involve modulation of cytosolic calcium. The effect on apoptosis is controversial depending on the cell types in which the studies have been conducted. May induce apoptosis by localizing in mitochondria and causing loss of mitochondrial membrane potential. May also modulate apoptosis by binding host CFLAR, a key regulator of the death-inducing signaling complex (DISC). Promotes viral transcription by using the host E3 ubiquitin ligase DDB1 to target the SMC5-SMC6 complex to proteasomal degradation. This host complex would otherwise bind to viral episomal DNA, and prevents its transcription. Moderately stimulates transcription of many different viral and cellular transcription elements. Promoters and enhancers stimulated by HBx contain DNA binding sites for NF-kappa-B, AP-1, AP-2, c-EBP, ATF/CREB, or the calcium-activated factor NF-AT. The chain is Protein X from Hepatitis B virus genotype B2 (isolate Indonesia/pIDW420/1988) (HBV-B).